The chain runs to 514 residues: Maturase K (514 aa).

The protein belongs to the intron maturase 2 family. MatK subfamily.

The protein localises to the plastid. The protein resides in the chloroplast. In terms of biological role, usually encoded in the trnK tRNA gene intron. Probably assists in splicing its own and other chloroplast group II introns. The sequence is that of Maturase K from Erythronium grandiflorum (Yellow avalanche-lily).